The sequence spans 417 residues: Squalene synthase (417 aa).

The NADP(+) site is built by Arg-52 and Arg-77. Asp-80, Glu-83, and Asp-84 together coordinate Mg(2+). NADP(+) is bound at residue Arg-218. The helical transmembrane segment at 284–304 (SIFNFCAIPQVMAIATLAACY) threads the bilayer. 2 residues coordinate NADP(+): Lys-315 and Arg-317. Residues 384-404 (PIYLSFVMLLAALSWQYLSTL) form a helical membrane-spanning segment.

This sequence belongs to the phytoene/squalene synthase family. Mg(2+) is required as a cofactor.

It localises to the endoplasmic reticulum membrane. It carries out the reaction 2 (2E,6E)-farnesyl diphosphate + NADPH + H(+) = squalene + 2 diphosphate + NADP(+). It catalyses the reaction 2 (2E,6E)-farnesyl diphosphate + NADH + H(+) = squalene + 2 diphosphate + NAD(+). The catalysed reaction is presqualene diphosphate + NADH + H(+) = squalene + diphosphate + NAD(+). The enzyme catalyses presqualene diphosphate + NADPH + H(+) = squalene + diphosphate + NADP(+). It carries out the reaction 2 (2E,6E)-farnesyl diphosphate = presqualene diphosphate + diphosphate. Its pathway is terpene metabolism; lanosterol biosynthesis; lanosterol from farnesyl diphosphate: step 1/3. Its function is as follows. Catalyzes the condensation of 2 farnesyl pyrophosphate (FPP) moieties to form squalene. Proceeds in two distinct steps. In the first half-reaction, two molecules of FPP react to form the stable presqualene diphosphate intermediate (PSQPP), with concomitant release of a proton and a molecule of inorganic diphosphate. In the second half-reaction, PSQPP undergoes heterolysis, isomerization, and reduction with NADPH or NADH to form squalene. It is the first committed enzyme of the sterol biosynthesis pathway. The chain is Squalene synthase (FDFT1) from Bos taurus (Bovine).